We begin with the raw amino-acid sequence, 897 residues long: Interleukin enhancer-binding factor 3 (897 aa).

A DZF domain is found at 5 to 378; the sequence is RIFVNDDRHV…PMKRPMEEDG (374 aa). The segment at 52-85 is disordered; sequence QEKGNSELSEAENMDTPPDDESKEGAGEQKAEHM. Residues 60–73 show a composition bias toward acidic residues; that stretch reads SEAENMDTPPDDES. Threonine 67 carries the post-translational modification Phosphothreonine. Residues 74 to 85 show a composition bias toward basic and acidic residues; that stretch reads KEGAGEQKAEHM. The residue at position 100 (lysine 100) is an N6-acetyllysine. Threonine 188 is modified (phosphothreonine; by PKR). At serine 190 the chain carries Phosphoserine. Residue lysine 297 forms a Glycyl lysine isopeptide (Lys-Gly) (interchain with G-Cter in ubiquitin) linkage. Threonine 315 bears the Phosphothreonine; by PKR mark. Lysine 348 participates in a covalent cross-link: Glycyl lysine isopeptide (Lys-Gly) (interchain with G-Cter in SUMO1). The tract at residues 363–401 is disordered; that stretch reads TTYAITPMKRPMEEDGEEKSPSKKKKKIQKKEEKAEPPQ. Residues 371–389 carry the Bipartite nuclear localization signal motif; that stretch reads KRPMEEDGEEKSPSKKKKK. The span at 372-383 shows a compositional bias: basic and acidic residues; the sequence is RPMEEDGEEKSP. Phosphoserine occurs at positions 382 and 384. Lysine 396 participates in a covalent cross-link: Glycyl lysine isopeptide (Lys-Gly) (interchain with G-Cter in SUMO2). A DRBM 1 domain is found at 398–467; that stretch reads EPPQAMNALM…AVKVLQDMGL (70 aa). The residue at position 460 (lysine 460) is an N6-acetyllysine. Disordered stretches follow at residues 466–524, 624–662, and 720–897; these read GLPT…LTKH, GMGGPMHNEAPPPPNIRGRGRGGNIRGRGRGRGFGGTNH, and GDSY…YQYR. Residues 472–481 are compositionally biased toward basic and acidic residues; that stretch reads EGRDSSKGED. Phosphoserine is present on residues serine 476, serine 477, serine 482, and serine 486. Lysine 489 is covalently cross-linked (Glycyl lysine isopeptide (Lys-Gly) (interchain with G-Cter in SUMO2)). Over residues 499–508 the composition is skewed to low complexity; sequence VEAVSNPSSV. The 67-residue stretch at 524–590 folds into the DRBM 2 domain; the sequence is HGKNPVMELN…ALAALEKLFP (67 aa). Residues 609 to 897 form an interaction with PRMT1 region; that stretch reads RGGPKFAAKP…TEHSMNYQYR (289 aa). Residues 644–662 show a composition bias toward gly residues; the sequence is RGGNIRGRGRGRGFGGTNH. Composition is skewed to low complexity over residues 745-769, 783-794, and 802-812; these read SYSSGYQSHQGQQQPYNQSQYSSYG, GSYSSYSNSYNS, and DYSYDSKFNYS. Phosphoserine occurs at positions 794, 812, 814, and 818. A compositionally biased stretch (gly residues) spans 813-822; the sequence is GSGGRSGGNS. Residues 823–833 are compositionally biased toward low complexity; that stretch reads YGSSGSSYNTG. A compositionally biased stretch (gly residues) spans 834-844; sequence SHGGYGAGSGG. A compositionally biased stretch (low complexity) spans 845 to 885; the sequence is SSSYQGKQGGYSSQSNYSSPGSSQSYSGPASSYQSSQGGYS.

Identified in a IGF2BP1-dependent mRNP granule complex containing untranslated mRNAs. Interacts with FUS and SMN. Interacts (via C-terminus) with PRMT1. Forms a complex with ILF2. Can also bind to PRKDC/XRCC7: this may stabilize the interaction of PRKDC/XRCC7 and the heterodimeric complex of XRCC6/KU70 and XRCC5/KU80. Forms a heteromeric complex with ZNF346 and ILF3. Found in a nuclear export complex with XPO5, ILF3, Ran and double-stranded RNA or double-stranded minihelix VA1 RNA. Found in a nuclear export complex with XPO5, RAN, ILF3, ZNF346 and double-stranded RNA. Interacts with XPO5 and ZNF346. Forms a complex with ILF2, YLPM1, KHDRBS1, RBMX, NCOA5 and PPP1CA. Interacts with AGO1 and AGO2. Interacts with DHX36; this interaction occurs in a RNA-dependent manner. Interacts with ELAVL1; this interaction occurs in a RNA-dependent manner. Interacts with HAVCR2; this interaction promotes ILF3 ubiquitination and subsequent degradation. Phosphorylated at Thr-188 and Thr-315 by PKR in response to RNA viruses. This phosphorylation results in the dissociation of ILF2 from the ILF2-ILF3 complex resulting in a cytoplasmic sequestration of ILF3 where it can bind to viral RNAs and impede viral replication. In terms of processing, methylated by protein arginine N-methyltransferase 1.

The protein localises to the nucleus. The protein resides in the nucleolus. It localises to the cytoplasm. In terms of biological role, RNA-binding protein that plays an essential role in the biogenesis of circular RNAs (circRNAs) which are produced by back-splicing circularization of pre-mRNAs. Within the nucleus, promotes circRNAs processing by stabilizing the regulatory elements residing in the flanking introns of the circularized exons. Plays thereby a role in the back-splicing of a subset of circRNAs. As a consequence, participates in a wide range of transcriptional and post-transcriptional processes. Binds to poly-U elements and AU-rich elements (AREs) in the 3'-UTR of target mRNAs. Upon viral infection, ILF3 accumulates in the cytoplasm and participates in the innate antiviral response. Mechanistically, ILF3 becomes phosphorylated and activated by the double-stranded RNA-activated protein kinase/PKR which releases ILF3 from cellular mature circRNAs. In turn, unbound ILF3 molecules are able to interact with and thus inhibit viral mRNAs. This Rattus norvegicus (Rat) protein is Interleukin enhancer-binding factor 3 (Ilf3).